A 433-amino-acid polypeptide reads, in one-letter code: Histidinol dehydrogenase homolog (433 aa).

Zn(2+)-binding residues include Gln-249 and His-252. Active-site proton acceptor residues include Glu-319 and His-320. Zn(2+)-binding residues include Asp-353 and His-412.

It belongs to the histidinol dehydrogenase family. Requires Zn(2+) as cofactor.

The polypeptide is Histidinol dehydrogenase homolog (Ruegeria pomeroyi (strain ATCC 700808 / DSM 15171 / DSS-3) (Silicibacter pomeroyi)).